Reading from the N-terminus, the 141-residue chain is Nucleoside diphosphate kinase (141 aa).

Residues lysine 11, phenylalanine 59, arginine 87, threonine 93, arginine 104, and asparagine 114 each contribute to the ATP site. The active-site Pros-phosphohistidine intermediate is histidine 117.

This sequence belongs to the NDK family. Homotetramer. Requires Mg(2+) as cofactor.

It is found in the cytoplasm. The catalysed reaction is a 2'-deoxyribonucleoside 5'-diphosphate + ATP = a 2'-deoxyribonucleoside 5'-triphosphate + ADP. It catalyses the reaction a ribonucleoside 5'-diphosphate + ATP = a ribonucleoside 5'-triphosphate + ADP. In terms of biological role, major role in the synthesis of nucleoside triphosphates other than ATP. The ATP gamma phosphate is transferred to the NDP beta phosphate via a ping-pong mechanism, using a phosphorylated active-site intermediate. The protein is Nucleoside diphosphate kinase of Polynucleobacter necessarius subsp. necessarius (strain STIR1).